A 189-amino-acid polypeptide reads, in one-letter code: Transcription factor E (189 aa).

The 93-residue stretch at 9 to 101 (AVKSLEIYVR…FWRIDSDTIN (93 aa)) folds into the HTH TFE/IIEalpha-type domain.

Belongs to the TFE family. As to quaternary structure, monomer. Interaction with RNA polymerase subunits RpoF and RpoE is necessary for Tfe stimulatory transcription activity. Able to interact with Tbp and RNA polymerase in the absence of DNA promoter. Interacts both with the preinitiation and elongation complexes.

Functionally, transcription factor that plays a role in the activation of archaeal genes transcribed by RNA polymerase. Facilitates transcription initiation by enhancing TATA-box recognition by TATA-box-binding protein (Tbp), and transcription factor B (Tfb) and RNA polymerase recruitment. Not absolutely required for transcription in vitro, but particularly important in cases where Tbp or Tfb function is not optimal. It dynamically alters the nucleic acid-binding properties of RNA polymerases by stabilizing the initiation complex and destabilizing elongation complexes. Seems to translocate with the RNA polymerase following initiation and acts by binding to the non template strand of the transcription bubble in elongation complexes. The protein is Transcription factor E of Aeropyrum pernix (strain ATCC 700893 / DSM 11879 / JCM 9820 / NBRC 100138 / K1).